The chain runs to 506 residues: Histidine ammonia-lyase (506 aa).

Residues 144-146 (ASG) constitute a cross-link (5-imidazolinone (Ala-Gly)). Ser145 is subject to 2,3-didehydroalanine (Ser).

Belongs to the PAL/histidase family. In terms of processing, contains an active site 4-methylidene-imidazol-5-one (MIO), which is formed autocatalytically by cyclization and dehydration of residues Ala-Ser-Gly.

The protein resides in the cytoplasm. It catalyses the reaction L-histidine = trans-urocanate + NH4(+). It participates in amino-acid degradation; L-histidine degradation into L-glutamate; N-formimidoyl-L-glutamate from L-histidine: step 1/3. The sequence is that of Histidine ammonia-lyase from Legionella pneumophila (strain Paris).